The sequence spans 219 residues: Vesicle-associated membrane protein 712 (219 aa).

Over 1–189 the chain is Cytoplasmic; it reads MSILYALVAR…NNTVWWRNCK (189 aa). The 105-residue stretch at 7-111 folds into the Longin domain; the sequence is LVARGTVVLA…AMNDEFSRVL (105 aa). The region spanning 126–186 is the v-SNARE coiled-coil homology domain; sequence TISRIKGEMN…RRFNNTVWWR (61 aa). The helical; Anchor for type IV membrane protein transmembrane segment at 190–210 threads the bilayer; sequence LTLLLILVLLVIIYIGVAFAC. Residues 211–219 lie on the Vesicular side of the membrane; that stretch reads HGPTLPSCV.

Belongs to the synaptobrevin family. As to expression, expressed in flowers, leaves, stems and roots.

Its subcellular location is the vacuole membrane. The protein localises to the prevacuolar compartment membrane. Its function is as follows. Involved in the targeting and/or fusion of transport vesicles to their target membrane. The polypeptide is Vesicle-associated membrane protein 712 (Arabidopsis thaliana (Mouse-ear cress)).